The chain runs to 447 residues: Methylenetetrahydrofolate--tRNA-(uracil-5-)-methyltransferase TrmFO (447 aa).

Gly-13–Gly-18 contacts FAD.

This sequence belongs to the MnmG family. TrmFO subfamily. The cofactor is FAD.

The protein resides in the cytoplasm. It carries out the reaction uridine(54) in tRNA + (6R)-5,10-methylene-5,6,7,8-tetrahydrofolate + NADH + H(+) = 5-methyluridine(54) in tRNA + (6S)-5,6,7,8-tetrahydrofolate + NAD(+). It catalyses the reaction uridine(54) in tRNA + (6R)-5,10-methylene-5,6,7,8-tetrahydrofolate + NADPH + H(+) = 5-methyluridine(54) in tRNA + (6S)-5,6,7,8-tetrahydrofolate + NADP(+). Its function is as follows. Catalyzes the folate-dependent formation of 5-methyl-uridine at position 54 (M-5-U54) in all tRNAs. The chain is Methylenetetrahydrofolate--tRNA-(uracil-5-)-methyltransferase TrmFO from Streptococcus thermophilus (strain ATCC BAA-250 / LMG 18311).